Here is a 221-residue protein sequence, read N- to C-terminus: MQDFAFAALSIWLCLGATALAESHGPQHCTSPNMTGVLTVMALTGGEIKATGHYSYDSTNKKLRFTESEMHLNKTEHLEDYLMLFEEGVFYDIDMKNQSCKKMSLHSHAHALELPAGAAHQVELFLGSDTVQEDNIKVNIWMGSVAETKGQYSALTTVGECLPLSTFYSTDSITLLFSNSEVVTEVKAPEMFTLPSFCEAVELEETPKGQKNDFFNIFNTV.

Residues 1 to 21 (MQDFAFAALSIWLCLGATALA) form the signal peptide. Asn33, Asn73, and Asn97 each carry an N-linked (GlcNAc...) asparagine glycan.

This sequence belongs to the ependymin family. Binds calcium through the terminal sialic acids. EPDs are synthesized in the meninx and secreted in the cerebrospinal fluid.

It is found in the secreted. May play a role in neural plasticity. May be involved during axon regeneration. This chain is Ependymin-2 (epd2), found in Oncorhynchus mykiss (Rainbow trout).